A 469-amino-acid polypeptide reads, in one-letter code: ABHD16B (469 aa).

The AB hydrolase-1 domain occupies 174–298; sequence VICCEGNAGF…GLVVRTVREH (125 aa). Active-site charge relay system residues include Ser-247, Asp-322, and His-418.

Belongs to the AB hydrolase superfamily. ABHD16 family.

It carries out the reaction a 1,2-diacyl-sn-glycero-3-phospho-L-serine + H2O = a 2-acyl-sn-glycero-3-phospho-L-serine + a fatty acid + H(+). It catalyses the reaction a 1-acylglycerol + H2O = glycerol + a fatty acid + H(+). The enzyme catalyses 1-(9Z-octadecenoyl)-glycerol + H2O = glycerol + (9Z)-octadecenoate + H(+). Hydrolyzes the sn-1 position of glycerophospholipids with high specificity towards phosphatidylserine (PS), PS-PLA1 enzyme. Also hydrolyzes the acyl chain of glycerolipids with a preference for the monoacylglycerol (MAG) 1-acylglycerol, MAG lipase. Plays a regulatory role in cellular lipid homeostasis by modulating genes involved in neutral lipid degradation and in phospholipid synthesis and composition. This is ABHD16B from Homo sapiens (Human).